The primary structure comprises 463 residues: MSLYSDGLSSDQYFLVNFIMSNYLGPDVYSDNPRCSSSQRLARGLPPYTLMHIGSSSLTVSQLQNLYYNVLRNAKSSLLLHPDMIYMYLKGYLPLEPSGKFPQFTHFFPTNLHPQKRYSPSHEIVKGIVVIDDPAVGFINKEELQRFRCLSRLDDLKIDRVTSLSPRVNLDESRETEQDCSRNGDATANGVVTNEDYNSSGELQETCKRKEGEDAVASCVISEPERLSGDIPESQGMKQDCSRNGESAFSGIVSDQDYYSFVKLPETCKRKNKEEEAVTGHAVSGTSKTPERFRETYKRRRFKNSSKKATNKNGETLMEREKTDKPIPFSSEMKESDAEPSVVTTGTASKETLGSSVGVVDIGVNKVAYFFQVALPGVRKDYGEFSCEIESDGKVILEGSTTRGEKNIKRHSRVFEMNIRKLCPPGPFKLCFNLPGPVDPRLFSPNFRSDGIFEGVIIRHKNS.

Residues Asn169–Arg182 show a composition bias toward basic and acidic residues. Disordered regions lie at residues Asn169 to Ser199 and Arg300 to Thr347. Residues Gly184–Ser199 show a composition bias toward polar residues. A compositionally biased stretch (basic residues) spans Arg300–Thr310.

In terms of assembly, interacts with MBD7 (via C-terminus), IDM1 and IDM2. Part of a complex made of MBD7, IDM1, IDM2 and IDM3.

The protein resides in the nucleus. In terms of biological role, acts as an anti-silencing factor that prevents DNA hypermethylation and gene repression. The protein is Increased DNA methylation 3 of Arabidopsis thaliana (Mouse-ear cress).